Here is a 136-residue protein sequence, read N- to C-terminus: MSALVYFSSSSENTHRFMQRLGLPATRIPLNERERIQVDEPYILVVPSYGGGGMAGAVPRQVIRFLNDEHNRARIRGVIASGNRNFGDAWGCAGDVIAQKCGVPWLYRFELMGTQRDIDNVRKGVNEFWQQLPRSA.

This sequence belongs to the NrdI family.

Probably involved in ribonucleotide reductase function. This is Protein NrdI from Salmonella agona (strain SL483).